The sequence spans 75 residues: uncharacterized protein (75 aa).

This is an uncharacterized protein from Methanocaldococcus jannaschii (strain ATCC 43067 / DSM 2661 / JAL-1 / JCM 10045 / NBRC 100440) (Methanococcus jannaschii).